Consider the following 106-residue polypeptide: UPF0145 protein CPF_0876 (106 aa).

It belongs to the UPF0145 family.

This is UPF0145 protein CPF_0876 from Clostridium perfringens (strain ATCC 13124 / DSM 756 / JCM 1290 / NCIMB 6125 / NCTC 8237 / Type A).